Consider the following 455-residue polypeptide: Bifunctional protein GlmU (455 aa).

The interval 1-226 is pyrophosphorylase; it reads MSLEIVILAA…PMEVQGANDR (226 aa). UDP-N-acetyl-alpha-D-glucosamine-binding positions include 8–11, Lys-22, Gln-73, 78–79, 99–101, Gly-136, Glu-151, Asn-166, and Asn-224; these read LAAG, GT, and YGD. Position 101 (Asp-101) interacts with Mg(2+). Mg(2+) is bound at residue Asn-224. The tract at residues 227-247 is linker; the sequence is KQLSELERHYQLRAGRRLMAQ. The N-acetyltransferase stretch occupies residues 248–455; it reads GVTLRDPARF…WKRPEKIKKN (208 aa). UDP-N-acetyl-alpha-D-glucosamine is bound by residues Arg-330 and Lys-348. Residue His-360 is the Proton acceptor of the active site. The UDP-N-acetyl-alpha-D-glucosamine site is built by Tyr-363 and Asn-374. Residues Ala-377, 383 to 384, Ser-402, Ala-420, and Arg-437 contribute to the acetyl-CoA site; that span reads NY.

The protein in the N-terminal section; belongs to the N-acetylglucosamine-1-phosphate uridyltransferase family. This sequence in the C-terminal section; belongs to the transferase hexapeptide repeat family. As to quaternary structure, homotrimer. Mg(2+) serves as cofactor.

The protein localises to the cytoplasm. The enzyme catalyses alpha-D-glucosamine 1-phosphate + acetyl-CoA = N-acetyl-alpha-D-glucosamine 1-phosphate + CoA + H(+). It catalyses the reaction N-acetyl-alpha-D-glucosamine 1-phosphate + UTP + H(+) = UDP-N-acetyl-alpha-D-glucosamine + diphosphate. It functions in the pathway nucleotide-sugar biosynthesis; UDP-N-acetyl-alpha-D-glucosamine biosynthesis; N-acetyl-alpha-D-glucosamine 1-phosphate from alpha-D-glucosamine 6-phosphate (route II): step 2/2. It participates in nucleotide-sugar biosynthesis; UDP-N-acetyl-alpha-D-glucosamine biosynthesis; UDP-N-acetyl-alpha-D-glucosamine from N-acetyl-alpha-D-glucosamine 1-phosphate: step 1/1. The protein operates within bacterial outer membrane biogenesis; LPS lipid A biosynthesis. Functionally, catalyzes the last two sequential reactions in the de novo biosynthetic pathway for UDP-N-acetylglucosamine (UDP-GlcNAc). The C-terminal domain catalyzes the transfer of acetyl group from acetyl coenzyme A to glucosamine-1-phosphate (GlcN-1-P) to produce N-acetylglucosamine-1-phosphate (GlcNAc-1-P), which is converted into UDP-GlcNAc by the transfer of uridine 5-monophosphate (from uridine 5-triphosphate), a reaction catalyzed by the N-terminal domain. This chain is Bifunctional protein GlmU, found in Pseudomonas fluorescens (strain Pf0-1).